The sequence spans 331 residues: Fructose-1,6-bisphosphatase class 1 2 (331 aa).

The Mg(2+) site is built by Glu-80, Asp-98, Leu-100, and Asp-101. Residues 101-104 and Asn-189 contribute to the substrate site; that span reads DGSS. Glu-261 provides a ligand contact to Mg(2+).

The protein belongs to the FBPase class 1 family. As to quaternary structure, homotetramer. Mg(2+) is required as a cofactor.

It is found in the cytoplasm. It carries out the reaction beta-D-fructose 1,6-bisphosphate + H2O = beta-D-fructose 6-phosphate + phosphate. It participates in carbohydrate biosynthesis; Calvin cycle. The polypeptide is Fructose-1,6-bisphosphatase class 1 2 (Cereibacter sphaeroides (strain ATCC 17023 / DSM 158 / JCM 6121 / CCUG 31486 / LMG 2827 / NBRC 12203 / NCIMB 8253 / ATH 2.4.1.) (Rhodobacter sphaeroides)).